A 219-amino-acid polypeptide reads, in one-letter code: Phosphatidylserine decarboxylase proenzyme (219 aa).

Serine 188 serves as the catalytic Schiff-base intermediate with substrate; via pyruvic acid. Serine 188 is modified (pyruvic acid (Ser); by autocatalysis).

The protein belongs to the phosphatidylserine decarboxylase family. PSD-A subfamily. In terms of assembly, heterodimer of a large membrane-associated beta subunit and a small pyruvoyl-containing alpha subunit. It depends on pyruvate as a cofactor. Post-translationally, is synthesized initially as an inactive proenzyme. Formation of the active enzyme involves a self-maturation process in which the active site pyruvoyl group is generated from an internal serine residue via an autocatalytic post-translational modification. Two non-identical subunits are generated from the proenzyme in this reaction, and the pyruvate is formed at the N-terminus of the alpha chain, which is derived from the carboxyl end of the proenzyme. The post-translation cleavage follows an unusual pathway, termed non-hydrolytic serinolysis, in which the side chain hydroxyl group of the serine supplies its oxygen atom to form the C-terminus of the beta chain, while the remainder of the serine residue undergoes an oxidative deamination to produce ammonia and the pyruvoyl prosthetic group on the alpha chain.

The protein localises to the cell membrane. The enzyme catalyses a 1,2-diacyl-sn-glycero-3-phospho-L-serine + H(+) = a 1,2-diacyl-sn-glycero-3-phosphoethanolamine + CO2. It participates in phospholipid metabolism; phosphatidylethanolamine biosynthesis; phosphatidylethanolamine from CDP-diacylglycerol: step 2/2. Its function is as follows. Catalyzes the formation of phosphatidylethanolamine (PtdEtn) from phosphatidylserine (PtdSer). This is Phosphatidylserine decarboxylase proenzyme from Trichlorobacter lovleyi (strain ATCC BAA-1151 / DSM 17278 / SZ) (Geobacter lovleyi).